The primary structure comprises 439 residues: 26S rRNA (cytosine-C(5))-methyltransferase nsun-5 (439 aa).

Residues Asp-266, Asp-293, and Asp-313 each contribute to the S-adenosyl-L-methionine site. The active-site Nucleophile is Cys-366.

The protein belongs to the class I-like SAM-binding methyltransferase superfamily. RsmB/NOP family.

The catalysed reaction is a cytidine in 26S rRNA + S-adenosyl-L-methionine = a 5-methylcytidine in 26S rRNA + S-adenosyl-L-homocysteine + H(+). Its function is as follows. S-adenosyl-L-methionine-dependent methyltransferase which methylates the carbon-5 position of cytosine 2381 to 5-methylcytosine (m5C2381) in 26S rRNA. Plays a role in the production of mature 5S, 5.8S, 18S and 26S rRNAs and promotes the processing of the internally transcribed spacer 2 (ITS2), which separates the 5.8S and 26S rRNAs on large pre-rRNA precursors. May play a role in the translation of leucine and proline codons. May play a role in maintaining ribosomal frameshifting in response to osmotic stress. Not required for global translation. This Caenorhabditis elegans protein is 26S rRNA (cytosine-C(5))-methyltransferase nsun-5.